The chain runs to 331 residues: Very-long-chain 3-oxoacyl-CoA reductase (331 aa).

Residues 15–35 (VQWALAGVGALYISAKVLSYL) traverse the membrane as a helical segment. Residues V60, D115, D123, N142, Y209, K213, I242, and S244 each coordinate NADP(+). Residue Y209 is the Proton donor of the active site. The Lowers pKa of active site Tyr role is filled by K213.

It belongs to the short-chain dehydrogenases/reductases (SDR) family.

The protein localises to the endoplasmic reticulum membrane. It carries out the reaction a very-long-chain (3R)-3-hydroxyacyl-CoA + NADP(+) = a very-long-chain 3-oxoacyl-CoA + NADPH + H(+). It participates in lipid metabolism; fatty acid biosynthesis. Functionally, component of the microsomal membrane bound fatty acid elongation system, which produces the 26-carbon very long-chain fatty acids (VLCFA) from palmitate. Catalyzes the reduction of the 3-ketoacyl-CoA intermediate that is formed in each cycle of fatty acid elongation. VLCFAs serve as precursors for ceramide and sphingolipids. The protein is Very-long-chain 3-oxoacyl-CoA reductase of Pyricularia oryzae (strain 70-15 / ATCC MYA-4617 / FGSC 8958) (Rice blast fungus).